Reading from the N-terminus, the 557-residue chain is Dihydroxy-acid dehydratase (557 aa).

Aspartate 78 lines the Mg(2+) pocket. Cysteine 119 provides a ligand contact to [2Fe-2S] cluster. 2 residues coordinate Mg(2+): aspartate 120 and lysine 121. Lysine 121 carries the N6-carboxylysine modification. Cysteine 192 contributes to the [2Fe-2S] cluster binding site. Mg(2+) is bound at residue glutamate 442. Serine 468 (proton acceptor) is an active-site residue.

It belongs to the IlvD/Edd family. In terms of assembly, homodimer. [2Fe-2S] cluster is required as a cofactor. Mg(2+) serves as cofactor.

The enzyme catalyses (2R)-2,3-dihydroxy-3-methylbutanoate = 3-methyl-2-oxobutanoate + H2O. It catalyses the reaction (2R,3R)-2,3-dihydroxy-3-methylpentanoate = (S)-3-methyl-2-oxopentanoate + H2O. It functions in the pathway amino-acid biosynthesis; L-isoleucine biosynthesis; L-isoleucine from 2-oxobutanoate: step 3/4. The protein operates within amino-acid biosynthesis; L-valine biosynthesis; L-valine from pyruvate: step 3/4. Its function is as follows. Functions in the biosynthesis of branched-chain amino acids. Catalyzes the dehydration of (2R,3R)-2,3-dihydroxy-3-methylpentanoate (2,3-dihydroxy-3-methylvalerate) into 2-oxo-3-methylpentanoate (2-oxo-3-methylvalerate) and of (2R)-2,3-dihydroxy-3-methylbutanoate (2,3-dihydroxyisovalerate) into 2-oxo-3-methylbutanoate (2-oxoisovalerate), the penultimate precursor to L-isoleucine and L-valine, respectively. The chain is Dihydroxy-acid dehydratase from Bacillus cereus (strain AH820).